Consider the following 504-residue polypeptide: MKIKTDEVTSVLKQEIKNFKKDLQVEEVGTVLEVGDGIARVYGLTNVMSGELVEFQNGVRGQAFNLEENSVGVVIFGDYIKIEEGFSVKRVGKIFEVPVGPELLGRVLNPLGEVIDGKGPLNAKKTRPVESPAPGIAMRKSVHEPMQTGIKAIDAMIPIGRGQRELIIGDRGTGKTSIAIDTIINQKGKGVICVYVAIGQKASTVASTIEMLREKGALEYTIIVSANASEPAPMLYIAPYSGATMAEYFMYEEGKATLVVYDDLSKQAVAYRQMSLLLRRPPGREAYPGDVFYLHSRLLERAAKLDDKFGGGSMTALPIIETQEGEVSAYIPTNVISITDGQIYLQSNLFASGLRPAVDVGISVSRVGSAAQIKAMKKVAGTLKSDLAQFRDLEAFAQLGTELDPVTQAQLDRGYRVLEILKQPNNSPTPVEEQVISIFAVTKGFMDVVPTAKVREFEAFLLKTMREQHPEILEEIRTAKEVKQEAALQKTIKSIVEHFLAKNN.

Residue 169 to 176 (GDRGTGKT) coordinates ATP.

This sequence belongs to the ATPase alpha/beta chains family. F-type ATPases have 2 components, CF(1) - the catalytic core - and CF(0) - the membrane proton channel. CF(1) has five subunits: alpha(3), beta(3), gamma(1), delta(1), epsilon(1). CF(0) has three main subunits: a(1), b(2) and c(9-12). The alpha and beta chains form an alternating ring which encloses part of the gamma chain. CF(1) is attached to CF(0) by a central stalk formed by the gamma and epsilon chains, while a peripheral stalk is formed by the delta and b chains.

Its subcellular location is the cell inner membrane. The enzyme catalyses ATP + H2O + 4 H(+)(in) = ADP + phosphate + 5 H(+)(out). Produces ATP from ADP in the presence of a proton gradient across the membrane. The alpha chain is a regulatory subunit. This chain is ATP synthase subunit alpha, found in Leptospira biflexa serovar Patoc (strain Patoc 1 / Ames).